We begin with the raw amino-acid sequence, 399 residues long: Acetate kinase (399 aa).

A Mg(2+)-binding site is contributed by asparagine 8. An ATP-binding site is contributed by lysine 15. Arginine 89 serves as a coordination point for substrate. The active-site Proton donor/acceptor is the aspartate 146. Residues 206-210 (HVGNG), 283-285 (DMR), and 331-335 (GMGEN) contribute to the ATP site. Glutamate 383 contributes to the Mg(2+) binding site.

It belongs to the acetokinase family. In terms of assembly, homodimer. Mg(2+) serves as cofactor. It depends on Mn(2+) as a cofactor.

The protein localises to the cytoplasm. It catalyses the reaction acetate + ATP = acetyl phosphate + ADP. The protein operates within metabolic intermediate biosynthesis; acetyl-CoA biosynthesis; acetyl-CoA from acetate: step 1/2. Its function is as follows. Catalyzes the formation of acetyl phosphate from acetate and ATP. Can also catalyze the reverse reaction. This chain is Acetate kinase, found in Streptococcus equi subsp. zooepidemicus (strain H70).